The following is an 85-amino-acid chain: MNYLVFFSLALLVMTGVESVRDGYIADDKNCAYFCGRNAYCDDECKKNGAESGYCQWAGVYGNACWCYKLPDKVPIRVPGKCNGG.

An N-terminal signal peptide occupies residues 1–19 (MNYLVFFSLALLVMTGVES). The 63-residue stretch at 21 to 83 (RDGYIADDKN…VPIRVPGKCN (63 aa)) folds into the LCN-type CS-alpha/beta domain. Disulfide bonds link C31-C82, C35-C55, C41-C65, and C45-C67.

Belongs to the long (4 C-C) scorpion toxin superfamily. Sodium channel inhibitor family. Alpha subfamily. In terms of tissue distribution, expressed by the venom gland.

The protein resides in the secreted. In terms of biological role, alpha toxins bind voltage-independently at site-3 of sodium channels (Nav) and inhibit the inactivation of the activated channels, thereby blocking neuronal transmission. This is Toxin BmKaTX15 from Olivierus martensii (Manchurian scorpion).